An 890-amino-acid polypeptide reads, in one-letter code: Leucine--tRNA ligase (890 aa).

The 'HIGH' region motif lies at 48–58 (PYPSGKLHMGH). Residues 645–649 (KMSKS) carry the 'KMSKS' region motif. Lysine 648 is an ATP binding site.

This sequence belongs to the class-I aminoacyl-tRNA synthetase family.

The protein localises to the cytoplasm. It carries out the reaction tRNA(Leu) + L-leucine + ATP = L-leucyl-tRNA(Leu) + AMP + diphosphate. This is Leucine--tRNA ligase from Polynucleobacter asymbioticus (strain DSM 18221 / CIP 109841 / QLW-P1DMWA-1) (Polynucleobacter necessarius subsp. asymbioticus).